Consider the following 348-residue polypeptide: Anthranilate phosphoribosyltransferase (348 aa).

Residues Gly-89, 92–93 (GD), Thr-97, 99–102 (NIST), 117–125 (KHGNRSASS), and Ser-129 each bind 5-phospho-alpha-D-ribose 1-diphosphate. Gly-89 contacts anthranilate. Ser-101 serves as a coordination point for Mg(2+). Asn-120 lines the anthranilate pocket. Arg-175 serves as a coordination point for anthranilate. The Mg(2+) site is built by Asp-234 and Glu-235.

Belongs to the anthranilate phosphoribosyltransferase family. As to quaternary structure, homodimer. Mg(2+) serves as cofactor.

The enzyme catalyses N-(5-phospho-beta-D-ribosyl)anthranilate + diphosphate = 5-phospho-alpha-D-ribose 1-diphosphate + anthranilate. Its pathway is amino-acid biosynthesis; L-tryptophan biosynthesis; L-tryptophan from chorismate: step 2/5. Its function is as follows. Catalyzes the transfer of the phosphoribosyl group of 5-phosphorylribose-1-pyrophosphate (PRPP) to anthranilate to yield N-(5'-phosphoribosyl)-anthranilate (PRA). The sequence is that of Anthranilate phosphoribosyltransferase from Synechocystis sp. (strain ATCC 27184 / PCC 6803 / Kazusa).